We begin with the raw amino-acid sequence, 186 residues long: Ribosome-recycling factor (186 aa).

The protein belongs to the RRF family.

The protein localises to the cytoplasm. Its function is as follows. Responsible for the release of ribosomes from messenger RNA at the termination of protein biosynthesis. May increase the efficiency of translation by recycling ribosomes from one round of translation to another. This chain is Ribosome-recycling factor, found in Chlorobaculum parvum (strain DSM 263 / NCIMB 8327) (Chlorobium vibrioforme subsp. thiosulfatophilum).